The chain runs to 471 residues: UDP-N-acetylmuramate--L-alanine ligase (471 aa).

114-120 (GTHGKTT) is an ATP binding site.

This sequence belongs to the MurCDEF family.

The protein localises to the cytoplasm. It catalyses the reaction UDP-N-acetyl-alpha-D-muramate + L-alanine + ATP = UDP-N-acetyl-alpha-D-muramoyl-L-alanine + ADP + phosphate + H(+). It functions in the pathway cell wall biogenesis; peptidoglycan biosynthesis. In terms of biological role, cell wall formation. The protein is UDP-N-acetylmuramate--L-alanine ligase of Rhizobium etli (strain ATCC 51251 / DSM 11541 / JCM 21823 / NBRC 15573 / CFN 42).